Consider the following 547-residue polypeptide: Methyl-accepting chemotaxis citrate transducer (547 aa).

The Cytoplasmic portion of the chain corresponds to 1 to 5; that stretch reads MKNIK. The chain crosses the membrane as a helical span at residues 6–29; that stretch reads VITGVIATLGIFSALLLVTGILFY. The Periplasmic portion of the chain corresponds to 30–189; the sequence is SAVSSDRLNF…ASDQNQSSFT (160 aa). The chain crosses the membrane as a helical span at residues 190-213; that stretch reads QMQWTLGIILLIVLIVLAFIWLGL. The Cytoplasmic segment spans residues 214-547; it reads QRVLLRPLQR…AAEQANWESF (334 aa). Positions 215–267 constitute an HAMP domain; it reads RVLLRPLQRIMAHIQTIADGDLTHEIEAEGRSEMGQLAAGLKTMQQSLIRTVS. In terms of domain architecture, Methyl-accepting transducer spans 272-501; it reads NADSIYTGAG…ESAAAAAALE (230 aa). Glutamate methyl ester (Gln) is present on Q296. The residue at position 303 (E303) is a Glutamate methyl ester (Glu). A Glutamate methyl ester (Gln) modification is found at Q310. The segment at 317 to 336 is disordered; that stretch reads QNTDNARQATGLAKTASETA. A glutamate methyl ester (Glu) mark is found at E492 and E501. The segment at 518–547 is disordered; the sequence is KQPRREASPTTLSKGLTPQPAAEQANWESF.

It belongs to the methyl-accepting chemotaxis (MCP) protein family. Post-translationally, methylation level is increased by citrate and decreased by phenol.

Its subcellular location is the cell inner membrane. In terms of biological role, acts as a receptor for citrate and mediates taxis away from phenol. Also mediates an attractant response to metal-citrate complexes. The sequence is that of Methyl-accepting chemotaxis citrate transducer (tcp) from Salmonella typhimurium (strain LT2 / SGSC1412 / ATCC 700720).